Consider the following 652-residue polypeptide: Putative enzymatic polyprotein (652 aa).

Residues 21 to 99 (YHGLFDTGAN…SPDIIIGATF (79 aa)) form the Peptidase A2 domain. The active site involves D26. Positions 231–413 (FIEEKTNFED…EKIDFLGVQI (183 aa)) constitute a Reverse transcriptase domain. Mg(2+) contacts are provided by D301, D364, and D365.

It catalyses the reaction DNA(n) + a 2'-deoxyribonucleoside 5'-triphosphate = DNA(n+1) + diphosphate. The catalysed reaction is Endonucleolytic cleavage to 5'-phosphomonoester.. Encodes for at least two polypeptides: protease (PR) and reverse transcriptase (RT). The protease processes the polyprotein in cis. Reverse transcriptase is multifunctional enzyme that converts the viral RNA genome into dsDNA in viral cytoplasmic capsids. This enzyme displays a DNA polymerase activity that can copy either DNA or RNA templates, and a ribonuclease H (RNase H) activity that cleaves the RNA strand of RNA-DNA heteroduplexes in a partially processive 3'- to 5'-endonucleasic mode. Neo-synthesized pregenomic RNA (pgRNA) are encapsidated, and reverse-transcribed inside the nucleocapsid. Partial (+)DNA is synthesized from the (-)DNA template and generates the relaxed circular DNA (RC-DNA) genome. After budding and infection, the RC-DNA migrates in the nucleus, and is converted into a plasmid-like covalently closed circular DNA (cccDNA). This Cassava vein mosaic virus (CsVMV) protein is Putative enzymatic polyprotein.